We begin with the raw amino-acid sequence, 163 residues long: Nucleotide-binding protein YajQ (163 aa).

The protein belongs to the YajQ family.

Its function is as follows. Nucleotide-binding protein. This Escherichia coli O127:H6 (strain E2348/69 / EPEC) protein is Nucleotide-binding protein YajQ.